A 269-amino-acid chain; its full sequence is Troponin I (269 aa).

The tract at residues 1–104 is disordered; sequence MADDEKKAAA…AKKGFMTPER (104 aa). Alanine 2 is subject to N-acetylalanine. Over residues 9 to 50 the composition is skewed to low complexity; that stretch reads AAPAAAPAAAAKPAAPAAAPAANGKAAPAANGKAAPAAAAAP. A compositionally biased stretch (basic and acidic residues) spans 56–91; sequence DPNDPKVKAEEAKKAKQAEIERKRAEVRKRMEEASK. Residues 162-171 form a troponin T-interaction region; that stretch reads ERMYICEGQK. The segment at 189 to 202 is actin-binding; sequence NAQVNDLRGKFVKP. Residues lysine 201 and lysine 205 each carry the N6,N6,N6-trimethyllysine modification. The segment at 239-269 is disordered; sequence TLEEEEKEKKPDWSKGKPGDAKVKEEVEAEA.

This sequence belongs to the troponin I family. In terms of assembly, binds to actin and tropomyosin. As to expression, all isoforms are expressed in somatic muscle. Isoforms containing exon 6a1 (isoforms 1 and 2) are expressed in all muscles but highest expression is in abdominal muscle and splanchnic muscle of the gut. Isoforms containing exon 6b1 (isoforms 5, 6, 9 and 10) are highly expressed in the tergal depressor of trochanter (TDT) muscle.

Functionally, troponin I is the ATPase inhibitory subunit of troponin in the thin filament regulatory complex. Involved in the development and maintenance of muscle and nervous system. May also be involved in the cytoskeletal apparatus. This is Troponin I (wupA) from Drosophila melanogaster (Fruit fly).